The following is an 82-amino-acid chain: M-theraphotoxin-Gr1a (82 aa).

Residues Met-1–Ala-21 form the signal peptide. The propeptide occupies Ser-22–Arg-46. 3 disulfide bridges follow: Cys-48–Cys-63, Cys-55–Cys-69, and Cys-62–Cys-76. A Phenylalanine amide modification is found at Phe-80.

This sequence belongs to the neurotoxin 10 (Hwtx-1) family. 52 (MTx4) subfamily. Expressed by the venom gland.

It is found in the secreted. Its function is as follows. This cationic hydrophobic peptide acts on a lot of different channels and has an antimicrobial activity. It blocks mechanosensitive ion channels (also named stretch-activated channels or SACs), without having effect on whole-cell voltage-sensitive currents. It also affects acetylcholine receptors (nAChRs) through interactions with membrane lipids by prolonging the closing time without affecting channel conductance or opening activity. It shows high affinity for lipid bilayers. It acts by partitioning into the membrane and perturbing the interface between the channel and the lipid bilayer without necessarily being in physical contact with the channel. It inhibits atrial fibrillation as well as the membrane motor of outer hair cells at low doses. It also binds to the voltage sensor of voltage-gated potassium channels from the archaebacterium Aeropyrum pernix (KvAP) without affecting channel gating. It also shows a low inhibition on a large spectra of sodium channels (Nav1.1/SCN1A, Nav1.2/SCN2A, Nav1.3/SCN3A, Nav1.4/SCN4A, Nav1.5/SCN5A, Nav1.6/SCN8A, Nav1.7/SCN9A) (IC(50)=7.4-14 uM), and potassium channels Kv11.1/KCNH2 and Kv11.2/KCNH6 (IC(50)=11 uM for both). It exhibits antimicrobial activities against the Gram-positive bacteria B.subtilis (MIC=0.5 uM), S.aureus (MIC=2-4 uM), and S.epidermidis (MIC=4-8 uM), and Gram-negative bacteria S.typhimurium (MIC=32.64 uM), P.aeruginosa (MIC=8-16 uM), and E.coli (MIC=8-16 uM). This chain is M-theraphotoxin-Gr1a, found in Grammostola rosea (Chilean rose tarantula).